Consider the following 299-residue polypeptide: S-fimbrial protein subunit SfaH (299 aa).

The protein belongs to the fimbrial protein family.

It localises to the fimbrium. Its function is as follows. Fimbriae (also called pili), polar filaments radiating from the surface of the bacterium to a length of 0.5-1.5 micrometers and numbering 100-300 per cell, enable bacteria to colonize the epithelium of specific host organs. In terms of biological role, a minor fimbrial subunit. This protein is necessary for full expression of S-specific binding. S-fimbrial adhesins enable pathogenic E.coli causing urinary-tract infections or newborn meningitis to attach to glycoproteins terminating with alpha-sialic acid-(2-3)-beta-Gal. The polypeptide is S-fimbrial protein subunit SfaH (sfaH) (Escherichia coli O6:K15:H31 (strain 536 / UPEC)).